The sequence spans 239 residues: Norbelladine 4'-O-methyltransferase 5 (239 aa).

Residues V55, E77, 79 to 80, S85, D103, and A132 each bind S-adenosyl-L-methionine; that span reads GV. D155 is a binding site for a divalent metal cation. An S-adenosyl-L-methionine-binding site is contributed by D157. The a divalent metal cation site is built by D181 and N182.

The protein belongs to the class I-like SAM-binding methyltransferase superfamily. Cation-dependent O-methyltransferase family. The cofactor is Mg(2+).

It carries out the reaction norbelladine + S-adenosyl-L-methionine = 4'-O-methylnorbelladine + S-adenosyl-L-homocysteine + H(+). It participates in alkaloid biosynthesis. 4'-O-methyltransferase converting norbelladine to 4'-O-methylnorbelladine. 4'-O-methylnorbelladine is a precursor to all Amaryllidaceae alkaloids such as galanthamine, lycorine and haemanthamine, and including haemanthamine- and crinamine-type alkaloids, promising anticancer agents. The sequence is that of Norbelladine 4'-O-methyltransferase 5 from Narcissus aff. pseudonarcissus MK-2014 (Daffodil).